The following is a 427-amino-acid chain: Enolase (427 aa).

Residue Gln-163 participates in (2R)-2-phosphoglycerate binding. Glu-205 (proton donor) is an active-site residue. Asp-242, Glu-288, and Asp-315 together coordinate Mg(2+). (2R)-2-phosphoglycerate-binding residues include Lys-340, Arg-369, Ser-370, and Lys-391. The active-site Proton acceptor is Lys-340.

This sequence belongs to the enolase family. Requires Mg(2+) as cofactor.

Its subcellular location is the cytoplasm. The protein resides in the secreted. It is found in the cell surface. The catalysed reaction is (2R)-2-phosphoglycerate = phosphoenolpyruvate + H2O. It functions in the pathway carbohydrate degradation; glycolysis; pyruvate from D-glyceraldehyde 3-phosphate: step 4/5. In terms of biological role, catalyzes the reversible conversion of 2-phosphoglycerate (2-PG) into phosphoenolpyruvate (PEP). It is essential for the degradation of carbohydrates via glycolysis. The sequence is that of Enolase from Amoebophilus asiaticus (strain 5a2).